An 87-amino-acid chain; its full sequence is Exodeoxyribonuclease 7 small subunit (87 aa).

Belongs to the XseB family. Heterooligomer composed of large and small subunits.

Its subcellular location is the cytoplasm. It catalyses the reaction Exonucleolytic cleavage in either 5'- to 3'- or 3'- to 5'-direction to yield nucleoside 5'-phosphates.. Bidirectionally degrades single-stranded DNA into large acid-insoluble oligonucleotides, which are then degraded further into small acid-soluble oligonucleotides. In Solidesulfovibrio magneticus (strain ATCC 700980 / DSM 13731 / RS-1) (Desulfovibrio magneticus), this protein is Exodeoxyribonuclease 7 small subunit.